The following is a 99-amino-acid chain: Defensin-like protein 2 (99 aa).

The N-terminal stretch at 1–30 (MAMAKKSVSSFTLIFILVLVIFEVPEIKAQ) is a signal peptide. 4 cysteine pairs are disulfide-bonded: cysteine 34–cysteine 86, cysteine 47–cysteine 71, cysteine 56–cysteine 81, and cysteine 60–cysteine 83. Positions 94–99 (ILRGGI) are excised as a propeptide.

Belongs to the DEFL family. Protease inhibitor I18 (RTI/MTI-2) subfamily.

It is found in the secreted. Functionally, inhibits bovine beta-trypsin and alpha-chymotrypsin on a 1:1 molar basis. The polypeptide is Defensin-like protein 2 (Sinapis alba (White mustard)).